We begin with the raw amino-acid sequence, 212 residues long: External core antigen (212 aa).

Positions 1 to 19 (MQLFHLCLIISCSCPTVQA) are cleaved as a signal peptide. Residues 25 to 27 (GWL) form an HBEAG region. Positions 165–212 (NAPILSTLPETTVVRRRGRSPRRRTPSPRRRRSQSPRRRRSQSRESQC) are disordered. A compositionally biased stretch (basic residues) spans 178–205 (VRRRGRSPRRRTPSPRRRRSQSPRRRRS). One copy of the 1; half-length repeat lies at 184-190 (SPRRRTP). The 3 X 8 AA repeats of S-P-R-R-R-R-S-Q stretch occupies residues 184–206 (SPRRRTPSPRRRRSQSPRRRRSQ). Positions 184–212 (SPRRRTPSPRRRRSQSPRRRRSQSRESQC) are excised as a propeptide. A run of 2 repeats spans residues 191 to 198 (SPRRRRSQ) and 199 to 206 (SPRRRRSQ).

It belongs to the orthohepadnavirus precore antigen family. In terms of assembly, homodimerizes. Phosphorylated. In terms of processing, cleaved by host furin.

The protein localises to the secreted. The protein resides in the host nucleus. In terms of biological role, may regulate immune response to the intracellular capsid in acting as a T-cell tolerogen, by having an immunoregulatory effect which prevents destruction of infected cells by cytotoxic T-cells. This immune regulation may predispose to chronicity during perinatal infections and prevent severe liver injury during adult infections. This chain is External core antigen, found in Homo sapiens (Human).